A 400-amino-acid chain; its full sequence is Mu-type opioid receptor (400 aa).

The Extracellular portion of the chain corresponds to 1–68 (MDSSAVPTNA…CPPTGSPSMI (68 aa)). N-linked (GlcNAc...) asparagine glycosylation is found at Asn9, Asn12, Asn33, Asn40, and Asn48. The chain crosses the membrane as a helical span at residues 69 to 93 (TAITIMALYSIVCVVGLFGNFLVMY). Topologically, residues 94-106 (VIVRYTKMKTATN) are cytoplasmic. A helical transmembrane segment spans residues 107-131 (IYIFNLALADALVTSTLPFQSVNYL). At 132–142 (MGTWPFGTILC) the chain is on the extracellular side. Cysteines 142 and 219 form a disulfide. Residues 143–165 (KIVISIDYYNMSTSIFTLCTMSV) form a helical membrane-spanning segment. The Cytoplasmic portion of the chain corresponds to 166–185 (DRYIAVCHPVKALDFRTPRN). The residue at position 168 (Tyr168) is a Phosphotyrosine. Residues 186–207 (AKIINVCNWILSSAIGLPVMFM) form a helical membrane-spanning segment. Over 208-230 (ATTKYRQGSIDCTLTFSHPSWYW) the chain is Extracellular. Residues 231 to 255 (ENLLKICVFIFAFIMPVLIITVCYG) form a helical membrane-spanning segment. Over 256-283 (LMILRLKSVRMLSGSKEKDRNLRRITRM) the chain is Cytoplasmic. A helical transmembrane segment spans residues 284-306 (VLVVVAVFIICWTPIHIYVIIKA). Over 307 to 314 (LVTIPETT) the chain is Extracellular. The helical transmembrane segment at 315–338 (FQTVSWHFCIALGYTNSCLNPVLY) threads the bilayer. The NPxxY; plays a role in stabilizing the activated conformation of the receptor motif lies at 334–338 (NPVLY). The Cytoplasmic segment spans residues 339-400 (AFLDEDFKRC…NLEAETAPLP (62 aa)). Cys353 carries S-palmitoyl cysteine lipidation. Positions 364 to 386 (NSTRIRQNTRDHPSTANTVDRTN) are disordered. The residue at position 365 (Ser365) is a Phosphoserine. The residue at position 372 (Thr372) is a Phosphothreonine. Residue Ser377 is modified to Phosphoserine. Thr396 is modified (phosphothreonine).

The protein belongs to the G-protein coupled receptor 1 family. In terms of assembly, forms homooligomers and heterooligomers with other GPCRs, such as OPRD1, OPRK1, OPRL1, NPFFR2, ADRA2A, SSTR2, CNR1 and CCR5 (probably in dimeric forms). Interacts with heterotrimeric G proteins; interaction with a heterotrimeric complex containing GNAI1, GNB1 and GNG2 stabilizes the active conformation of the receptor and increases its affinity for endomorphin-2, the synthetic opioid peptide DAMGO and for morphinan agonists. Interacts with PPL; the interaction disrupts agonist-mediated G-protein activation. Interacts (via C-terminus) with DNAJB4 (via C-terminus). Interacts with calmodulin; the interaction inhibits the constitutive activity of OPRM1; it abolishes basal and attenuates agonist-stimulated G-protein coupling. Interacts with FLNA, PLD2, RANBP9 and WLS and GPM6A. Interacts with RTP4. Interacts with SYP and GNAS. Interacts with RGS9, RGS17, RGS20, RGS4, PPP1R9B and HINT1. Phosphorylated. Differentially phosphorylated in basal and agonist-induced conditions. Agonist-mediated phosphorylation modulates receptor internalization. Phosphorylated by GRK2 in a agonist-dependent manner. Phosphorylation at Tyr-168 requires receptor activation, is dependent on non-receptor protein tyrosine kinase Src and results in a decrease in agonist efficacy by reducing G-protein coupling efficiency. Phosphorylated on tyrosine residues; the phosphorylation is involved in agonist-induced G-protein-independent receptor down-regulation. Phosphorylation at Ser-377 is involved in G-protein-dependent but not beta-arrestin-dependent activation of the ERK pathway. In terms of processing, ubiquitinated. A basal ubiquitination seems not to be related to degradation. Ubiquitination is increased upon formation of OPRM1:OPRD1 oligomers leading to proteasomal degradation; the ubiquitination is diminished by RTP4.

It is found in the cell membrane. The protein localises to the cell projection. It localises to the axon. Its subcellular location is the perikaryon. The protein resides in the dendrite. It is found in the endosome. Receptor for endogenous opioids such as beta-endorphin and endomorphin. Receptor for natural and synthetic opioids including morphine, heroin, DAMGO, fentanyl, etorphine, buprenorphin and methadone. Also activated by enkephalin peptides, such as Met-enkephalin or Met-enkephalin-Arg-Phe, with higher affinity for Met-enkephalin-Arg-Phe. Agonist binding to the receptor induces coupling to an inactive GDP-bound heterotrimeric G-protein complex and subsequent exchange of GDP for GTP in the G-protein alpha subunit leading to dissociation of the G-protein complex with the free GTP-bound G-protein alpha and the G-protein beta-gamma dimer activating downstream cellular effectors. The agonist- and cell type-specific activity is predominantly coupled to pertussis toxin-sensitive G(i) and G(o) G alpha proteins, GNAI1, GNAI2, GNAI3 and GNAO1, and to a lesser extent to pertussis toxin-insensitive G alpha proteins GNAZ and GNA15. They mediate an array of downstream cellular responses, including inhibition of adenylate cyclase activity and both N-type and L-type calcium channels, activation of inward rectifying potassium channels, mitogen-activated protein kinase (MAPK), phospholipase C (PLC), phosphoinositide/protein kinase (PKC), phosphoinositide 3-kinase (PI3K) and regulation of NF-kappa-B. Also couples to adenylate cyclase stimulatory G alpha proteins. The selective temporal coupling to G-proteins and subsequent signaling can be regulated by RGSZ proteins, such as RGS9, RGS17 and RGS4. Phosphorylation by members of the GPRK subfamily of Ser/Thr protein kinases and association with beta-arrestins is involved in short-term receptor desensitization. Beta-arrestins associate with the GPRK-phosphorylated receptor and uncouple it from the G-protein thus terminating signal transduction. The phosphorylated receptor is internalized through endocytosis via clathrin-coated pits which involves beta-arrestins. The activation of the ERK pathway occurs either in a G-protein-dependent or a beta-arrestin-dependent manner and is regulated by agonist-specific receptor phosphorylation. Acts as a class A G-protein coupled receptor (GPCR) which dissociates from beta-arrestin at or near the plasma membrane and undergoes rapid recycling. Receptor down-regulation pathways are varying with the agonist and occur dependent or independent of G-protein coupling. Endogenous ligands induce rapid desensitization, endocytosis and recycling. Heterooligomerization with other GPCRs can modulate agonist binding, signaling and trafficking properties. Involved in neurogenesis. This chain is Mu-type opioid receptor (OPRM1), found in Macaca mulatta (Rhesus macaque).